A 341-amino-acid chain; its full sequence is Phosphatidylserine decarboxylase proenzyme (341 aa).

Residues Asp-90, His-147, and Ser-254 each act as charge relay system; for autoendoproteolytic cleavage activity in the active site. The Schiff-base intermediate with substrate; via pyruvic acid; for decarboxylase activity role is filled by Ser-254. Position 254 is a pyruvic acid (Ser); by autocatalysis (Ser-254). The disordered stretch occupies residues 287 to 341 (RQDEQTPVVFPEGTELEENDAAQPPVAATSEPVQADGQNPAAEVSGQTGHKPDAP).

Belongs to the phosphatidylserine decarboxylase family. PSD-B subfamily. Prokaryotic type I sub-subfamily. In terms of assembly, heterodimer of a large membrane-associated beta subunit and a small pyruvoyl-containing alpha subunit. It depends on pyruvate as a cofactor. In terms of processing, is synthesized initially as an inactive proenzyme. Formation of the active enzyme involves a self-maturation process in which the active site pyruvoyl group is generated from an internal serine residue via an autocatalytic post-translational modification. Two non-identical subunits are generated from the proenzyme in this reaction, and the pyruvate is formed at the N-terminus of the alpha chain, which is derived from the carboxyl end of the proenzyme. The autoendoproteolytic cleavage occurs by a canonical serine protease mechanism, in which the side chain hydroxyl group of the serine supplies its oxygen atom to form the C-terminus of the beta chain, while the remainder of the serine residue undergoes an oxidative deamination to produce ammonia and the pyruvoyl prosthetic group on the alpha chain. During this reaction, the Ser that is part of the protease active site of the proenzyme becomes the pyruvoyl prosthetic group, which constitutes an essential element of the active site of the mature decarboxylase.

Its subcellular location is the cell membrane. The enzyme catalyses a 1,2-diacyl-sn-glycero-3-phospho-L-serine + H(+) = a 1,2-diacyl-sn-glycero-3-phosphoethanolamine + CO2. It participates in phospholipid metabolism; phosphatidylethanolamine biosynthesis; phosphatidylethanolamine from CDP-diacylglycerol: step 2/2. Catalyzes the formation of phosphatidylethanolamine (PtdEtn) from phosphatidylserine (PtdSer). This is Phosphatidylserine decarboxylase proenzyme from Pectobacterium atrosepticum (strain SCRI 1043 / ATCC BAA-672) (Erwinia carotovora subsp. atroseptica).